A 1791-amino-acid polypeptide reads, in one-letter code: Sodium channel protein type 11 subunit alpha (1791 aa).

The Cytoplasmic segment spans residues 1–126; the sequence is MDDRCYPVIF…SIRSLAIRVS (126 aa). The I repeat unit spans residues 115–408; it reads FNSIRSLAIR…VTMAYEEQNK (294 aa). Residues 127–148 traverse the membrane as a helical segment; sequence VHSLFSMFIIGTVIINCVFMAT. The Extracellular segment spans residues 149–156; sequence GPAKNSNS. Residues 157 to 180 traverse the membrane as a helical segment; the sequence is NNTDIAECVFTGIYIFEALIKILA. Topologically, residues 181-192 are cytoplasmic; the sequence is RGFILDEFSFLR. A helical membrane pass occupies residues 193 to 212; the sequence is DPWNWLDSIVIGIAIVSYIP. Residues 213–219 lie on the Extracellular side of the membrane; sequence GITIKLL. The chain crosses the membrane as a helical; Voltage-sensor span at residues 220–239; the sequence is PLRTFRVFRALKAISVVSRL. The Cytoplasmic segment spans residues 240–255; that stretch reads KVIVGALLRSVKKLVN. Residues 256–269 traverse the membrane as a helical segment; it reads VIILTFFCLSIFAL. The Extracellular segment spans residues 270–344; the sequence is VGQQLFMGSL…PDYNYTNFDN (75 aa). An intrachain disulfide couples Cys-283 to Cys-322. N-linked (GlcNAc...) asparagine glycosylation is found at Asn-290 and Asn-338. Positions 345 to 369 form an intramembrane region, pore-forming; the sequence is FGWSFLAMFRLMTQDSWEKLYQQTL. The Extracellular segment spans residues 370-376; the sequence is RTTGLYS. Residues 377-402 form a helical membrane-spanning segment; the sequence is VFFFIVVIFLGSFYLINLTLAVVTMA. Residues 403-572 lie on the Cytoplasmic side of the membrane; it reads YEEQNKNVAA…WLCVKKVLRT (170 aa). Residues 559 to 833 form an II repeat; the sequence is CCPQWLCVKK…EGEARKTKVQ (275 aa). A helical membrane pass occupies residues 573–596; it reads VMTDPFTELAITICIIINTVFLAM. The Extracellular segment spans residues 597–607; sequence EHHKMEASFEK. The chain crosses the membrane as a helical span at residues 608–631; sequence MLNIGNLVFTSIFIAEMCLKIIAL. Over 632–639 the chain is Cytoplasmic; it reads DPYHYFRR. Residues 640–659 form a helical membrane-spanning segment; that stretch reads GWNIFDSIVALLSFADVMNC. Residues 660–667 are Extracellular-facing; that stretch reads VLQKRSWP. A helical; Voltage-sensor transmembrane segment spans residues 668–687; sequence FLRSFRVLRVFKLAKSWPTL. Residues 688–702 lie on the Cytoplasmic side of the membrane; that stretch reads NTLIKIIGNSVGALG. Residues 703-725 form a helical membrane-spanning segment; it reads SLTVVLVIVIFIFSVVGMQLFGR. The Extracellular portion of the chain corresponds to 726–753; the sequence is SFNSQKSPKLCNPTGPTVSCLRHWHMGD. The pore-forming intramembrane region spans 754 to 774; it reads FWHSFLVVFRILCGEWIENMW. Over 775–785 the chain is Extracellular; sequence ECMQEANASSS. The cysteines at positions 776 and 787 are disulfide-linked. Residue Asn-781 is glycosylated (N-linked (GlcNAc...) asparagine). Residues 786–811 form a helical membrane-spanning segment; it reads LCVIVFILITVIGKLVVLNLFIALLL. Topologically, residues 812 to 1051 are cytoplasmic; that stretch reads NSFSNEERNG…WWNLRKTCYQ (240 aa). One copy of the III repeat lies at 1044-1339; that stretch reads NLRKTCYQIV…KKYYNAMKKL (296 aa). Residues 1052 to 1074 form a helical membrane-spanning segment; it reads IVKHSWFESFIIFVILLSSGALI. The Extracellular segment spans residues 1075 to 1088; sequence FEDVHLENQPKIQE. The chain crosses the membrane as a helical span at residues 1089–1114; that stretch reads LLNCTDIIFTHIFILEMVLKWVAFGF. Over 1115 to 1120 the chain is Cytoplasmic; that stretch reads GKYFTS. A helical membrane pass occupies residues 1121–1138; that stretch reads AWCCLDFIIVIVSVTTLI. A topological domain (extracellular) is located at residue Asn-1139. Residues 1140–1161 traverse the membrane as a helical; Voltage-sensor segment; that stretch reads LMELKSFRTLRALRPLRALSQF. Topologically, residues 1162-1180 are cytoplasmic; that stretch reads EGMKVVVNALIGAIPAILN. The chain crosses the membrane as a helical span at residues 1181–1202; it reads VLLVCLIFWLVFCILGVYFFSG. The Extracellular segment spans residues 1203–1243; that stretch reads KFGKCINGTDSVINYTIITNKSQCESGNFSWINQKVNFDNV. 4 N-linked (GlcNAc...) asparagine glycosylation sites follow: Asn-1209, Asn-1216, Asn-1222, and Asn-1230. Positions 1244-1265 form an intramembrane region, pore-forming; it reads GNAYLALLQVATFKGWMDIIYA. At 1266–1281 the chain is on the extracellular side; sequence AVDSTEKEQQPEFESN. A helical transmembrane segment spans residues 1282-1308; the sequence is SLGYIYFVVFIIFGSFFTLNLFIGVII. Topologically, residues 1309 to 1361 are cytoplasmic; the sequence is DNFNQQQKKLGGQDIFMTEEQKKYYNAMKKLGSKKPQKPIPRPLNKCQGLVFD. One copy of the IV repeat lies at 1348 to 1639; it reads IPRPLNKCQG…WEKFDPEATQ (292 aa). Residues 1362-1385 traverse the membrane as a helical segment; it reads IVTSQIFDIIIISLIILNMISMMA. Residues 1386 to 1396 are Extracellular-facing; it reads ESYNQPKAMKS. Residues 1397-1420 traverse the membrane as a helical segment; that stretch reads ILDHLNWVFVVIFTLECLIKIFAL. Residues 1421–1426 lie on the Cytoplasmic side of the membrane; that stretch reads RQYYFT. A helical transmembrane segment spans residues 1427–1450; that stretch reads NGWNLFDCVVVLLSIVSTMISTLE. The Extracellular portion of the chain corresponds to 1451–1461; that stretch reads NQEHIPFPPTL. A helical; Voltage-sensor transmembrane segment spans residues 1462–1484; it reads FRIVRLARIGRILRLVRAARGIR. Residues 1485–1499 are Cytoplasmic-facing; that stretch reads TLLFALMMSLPSLFN. Residues 1500–1522 form a helical membrane-spanning segment; it reads IGLLLFLIMFIYAILGMNWFSKV. Over 1523-1536 the chain is Extracellular; it reads NPESGIDDIFNFKT. An intramembrane region (pore-forming) is located at residues 1537-1559; that stretch reads FASSMLCLFQISTSAGWDSLLSP. The Extracellular portion of the chain corresponds to 1560–1579; that stretch reads MLRSKESCNSSSENCHLPGI. N-linked (GlcNAc...) asparagine glycosylation is present at Asn-1568. A helical transmembrane segment spans residues 1580-1604; the sequence is ATSYFVSYIIISFLIVVNMYIAVIL. Over 1605–1791 the chain is Cytoplasmic; sequence ENFNTATEES…GVAKGKVHCD (187 aa).

This sequence belongs to the sodium channel (TC 1.A.1.10) family. Nav1.9/SCN11A subfamily. In terms of assembly, the voltage-resistant sodium channel consists of an ion conducting pore forming alpha-subunit regulated by one or more auxiliary subunits SCN1B, SCN2B and SCN3B. Expressed in the dorsal root ganglia and trigeminal ganglia, olfactory bulb, hippocampus, cerebellar cortex, spinal cord, spleen, small intestine and placenta.

It is found in the cell membrane. The enzyme catalyses Na(+)(in) = Na(+)(out). With respect to regulation, activity is not sensitive to inhibition by tetrodotoxin. Functionally, sodium channel mediating the voltage-dependent sodium ion permeability of excitable membranes. Assuming opened or closed conformations in response to the voltage difference across the membrane, the protein forms a sodium-selective channel through which sodium ions may pass in accordance with their electrochemical gradient. Involved in membrane depolarization during action potential in nociceptors which function as key relay stations for the electrical transmission of pain signals from the periphery to the central nervous system. Also involved in rapid BDNF-evoked neuronal depolarization. The polypeptide is Sodium channel protein type 11 subunit alpha (Homo sapiens (Human)).